A 481-amino-acid chain; its full sequence is Tripartite motif-containing protein 10 (481 aa).

An RING-type zinc finger spans residues 16 to 61 (CPICQGTLREPVTIDCGHNFCRACLTRYCEIPGPDLEESPTCPLCK). A B box-type zinc finger spans residues 94–135 (GEEDVCQEHGEKIYFFCEDDEMQLCVVCREAGEHATHTMRFL). The Zn(2+) site is built by Cys-99, His-102, Cys-121, and His-127. Positions 142-177 (YREQIHKCLKRLRKEREETQEIQSRENKRMQVLLTQ) form a coiled coil. A B30.2/SPRY domain is found at 292–481 (REMKMFLEKL…GRGSSFFLSS (190 aa)).

This sequence belongs to the TRIM/RBCC family. Interacts with IFNAR1; this interaction prevents association of IFNAR1 with TYK2.

The protein localises to the cytoplasm. In terms of biological role, E3 ligase that plays an essential role in the differentiation and survival of terminal erythroid cells. May directly bind to PTEN and promote its ubiquitination, resulting in its proteasomal degradation and activation of hypertrophic signaling. In addition, plays a role in immune response regulation by repressing the phosphorylation of STAT1 and STAT2 in the interferon/JAK/STAT signaling pathway independent of its E3 ligase activity. Mechanistically, interacts with the intracellular domain of IFNAR1 and thereby inhibits the association of TYK2 and IFNAR1. This is Tripartite motif-containing protein 10 (TRIM10) from Pan troglodytes (Chimpanzee).